Reading from the N-terminus, the 518-residue chain is Lycopene epsilon cyclase, chloroplastic (518 aa).

Position 100 to 128 (100 to 128 (LIVIGCGPAGMSLAAEAGKRGLSVGLIGP)) interacts with NAD(+). A run of 2 helical transmembrane segments spans residues 435–455 (FFLF…RIFF) and 469–489 (FLGS…MFAI).

This sequence belongs to the lycopene cyclase family. Expressed in leaves and roots. Detected in flower buds and lips.

It localises to the plastid. Its subcellular location is the chloroplast membrane. It carries out the reaction a carotenoid psi-end group = a carotenoid epsilon-end group. It participates in carotenoid biosynthesis; alpha-zeacarotene biosynthesis. It functions in the pathway carotenoid biosynthesis; delta-carotene biosynthesis. Catalyzes the single epsilon-cyclization reaction which converts lycopene to delta-carotene and neurosporene to alpha-zeacarotene. Required for lutein biosynthesis. This is Lycopene epsilon cyclase, chloroplastic from Oncidium hybrid cultivar (Orchid).